An 85-amino-acid polypeptide reads, in one-letter code: Large ribosomal subunit protein bL27 (85 aa).

The tract at residues 1–22 (MAHKKAGGSTKNGRDSESKRLG) is disordered.

This sequence belongs to the bacterial ribosomal protein bL27 family.

The protein is Large ribosomal subunit protein bL27 of Alteromonas mediterranea (strain DSM 17117 / CIP 110805 / LMG 28347 / Deep ecotype).